Reading from the N-terminus, the 247-residue chain is UPF0259 membrane protein BUAPTUC7_273 (247 aa).

6 consecutive transmembrane segments (helical) span residues 20–40 (IGAIFFISIFATFMNILIDMF), 85–105 (IMESLISKTTLLGSIIILISF), 114–134 (IVSSIRTFFLFFPSLFILNFL), 137–157 (FIIQIGFMLLIIPGILLSIIL), 188–208 (IIGPGVLFWMCGKFILTMLLA), and 218–238 (LFLISNISMNILFSILIIYLF).

Belongs to the UPF0259 family.

Its subcellular location is the cell membrane. The protein is UPF0259 membrane protein BUAPTUC7_273 of Buchnera aphidicola subsp. Acyrthosiphon pisum (strain Tuc7).